The following is a 167-amino-acid chain: Large ribosomal subunit protein uL10 (167 aa).

This sequence belongs to the universal ribosomal protein uL10 family. In terms of assembly, part of the ribosomal stalk of the 50S ribosomal subunit. The N-terminus interacts with L11 and the large rRNA to form the base of the stalk. The C-terminus forms an elongated spine to which L12 dimers bind in a sequential fashion forming a multimeric L10(L12)X complex.

Forms part of the ribosomal stalk, playing a central role in the interaction of the ribosome with GTP-bound translation factors. This is Large ribosomal subunit protein uL10 from Flavobacterium johnsoniae (strain ATCC 17061 / DSM 2064 / JCM 8514 / BCRC 14874 / CCUG 350202 / NBRC 14942 / NCIMB 11054 / UW101) (Cytophaga johnsonae).